Reading from the N-terminus, the 538-residue chain is RNA-binding protein Ro60 (538 aa).

An N-acetylmethionine modification is found at methionine 1. 2 positions are modified to phosphoserine: serine 4 and serine 19. Residues 16–369 (VVNSEGGCVW…TFKTVEPTGK (354 aa)) form the TROVE domain. Positions 120–284 (RIPTHLFTFI…EMPLTALLRN (165 aa)) are RNA-binding. Lysine 224 bears the N6-acetyllysine mark. Positions 361–538 (FKTVEPTGKR…VIRNFTLDVI (178 aa)) are VWFA-like domain. Residues serine 378, serine 380, and threonine 445 each coordinate a divalent metal cation.

It belongs to the Ro 60 kDa family. In terms of assembly, identified in a IGF2BP1-dependent mRNP granule complex containing untranslated mRNAs. Found in a complex with PUF60 and Y5 RNA. Interacts with RAB11FIP5. In terms of tissue distribution, highest in brain, followed by lung, muscle, kidney and heart. Lower levels are found in testis, liver and spleen.

Its subcellular location is the cytoplasm. In terms of biological role, RNA-binding protein that binds to misfolded non-coding RNAs, pre-5S rRNA, and several small cytoplasmic RNA molecules known as Y RNAs. May play roles in cilia formation and/or maintenance. In Mus musculus (Mouse), this protein is RNA-binding protein Ro60.